We begin with the raw amino-acid sequence, 651 residues long: Translation factor GUF1 homolog, mitochondrial (651 aa).

The transit peptide at methionine 1–phenylalanine 26 directs the protein to the mitochondrion. One can recognise a tr-type G domain in the interval lysine 51 to lysine 228. Residues alanine 60–serine 67, aspartate 121–histidine 125, and asparagine 175–aspartate 178 contribute to the GTP site.

It belongs to the TRAFAC class translation factor GTPase superfamily. Classic translation factor GTPase family. LepA subfamily.

The protein resides in the mitochondrion inner membrane. The enzyme catalyses GTP + H2O = GDP + phosphate + H(+). Promotes mitochondrial protein synthesis. May act as a fidelity factor of the translation reaction, by catalyzing a one-codon backward translocation of tRNAs on improperly translocated ribosomes. Binds to mitochondrial ribosomes in a GTP-dependent manner. The protein is Translation factor GUF1 homolog, mitochondrial of Brugia malayi (Filarial nematode worm).